We begin with the raw amino-acid sequence, 157 residues long: Arginine repressor (157 aa).

Belongs to the ArgR family.

Its subcellular location is the cytoplasm. It functions in the pathway amino-acid biosynthesis; L-arginine biosynthesis [regulation]. Its function is as follows. Regulates arginine biosynthesis genes. The polypeptide is Arginine repressor (Bacteroides thetaiotaomicron (strain ATCC 29148 / DSM 2079 / JCM 5827 / CCUG 10774 / NCTC 10582 / VPI-5482 / E50)).